Reading from the N-terminus, the 239-residue chain is Proteasome subunit beta type-6 (239 aa).

At Ala-2 the chain carries N-acetylalanine. Positions 2–34 (AATLLAARGAGPAPAWGPEAFTPDWESREVSTG) are cleaved as a propeptide — removed in mature form. Residue Thr-35 is the Nucleophile of the active site. Position 69 is a phosphothreonine (Thr-69).

This sequence belongs to the peptidase T1B family. In terms of assembly, the 26S proteasome consists of a 20S proteasome core and two 19S regulatory subunits. The 20S proteasome core is a barrel-shaped complex made of 28 subunits that are arranged in four stacked rings. The two outer rings are each formed by seven alpha subunits, and the two inner rings are formed by seven beta subunits. The proteolytic activity is exerted by three beta-subunits PSMB5, PSMB6 and PSMB7. (Microbial infection) Interacts with HIV-1 protein Tat.

The protein resides in the cytoplasm. It localises to the nucleus. It catalyses the reaction Cleavage of peptide bonds with very broad specificity.. Functionally, component of the 20S core proteasome complex involved in the proteolytic degradation of most intracellular proteins. This complex plays numerous essential roles within the cell by associating with different regulatory particles. Associated with two 19S regulatory particles, forms the 26S proteasome and thus participates in the ATP-dependent degradation of ubiquitinated proteins. The 26S proteasome plays a key role in the maintenance of protein homeostasis by removing misfolded or damaged proteins that could impair cellular functions, and by removing proteins whose functions are no longer required. Associated with the PA200 or PA28, the 20S proteasome mediates ubiquitin-independent protein degradation. This type of proteolysis is required in several pathways including spermatogenesis (20S-PA200 complex) or generation of a subset of MHC class I-presented antigenic peptides (20S-PA28 complex). Within the 20S core complex, PSMB6 displays a peptidylglutamyl-hydrolizing activity also termed postacidic or caspase-like activity, meaning that the peptides bond hydrolysis occurs directly after acidic residues. In Homo sapiens (Human), this protein is Proteasome subunit beta type-6.